The following is a 146-amino-acid chain: MPLVPKRVKHRREFRGKMRGAAKGGKYIAFGEYGLEALESHWITNRQIEAARVAMTRYMKRGGKVWIRIFPQKSYTAKGVGVRMGSGKGAPAGWVAVVKREKILFEIGGVSEEVAREALRLASTKLPIKTKFVTRSSEVGGESNEG.

Belongs to the universal ribosomal protein uL16 family. As to quaternary structure, part of the 50S ribosomal subunit.

Its function is as follows. Binds 23S rRNA and is also seen to make contacts with the A and possibly P site tRNAs. In Lactobacillus acidophilus (strain ATCC 700396 / NCK56 / N2 / NCFM), this protein is Large ribosomal subunit protein uL16.